The primary structure comprises 573 residues: MDPQGIVKAFPKRKKSHADLSSKALAKIPKREVGEARGWLSSLRAHIMPAGIGRARAELFEKQIIHHGGQVCSAQAPGVTHIVVDEDMDYERALRLLRLPQLPPGAQLVKSTWLSLCLQEGRLTDTEGFSLPMPKRSLDEPQPSKSGQDASAPGTQRDLPRTTLSLSPPHTRAVSPPPTAEKPSRTQAQLSSEDETSDGEGPQVSSADLQALITGHYPTPPEEDGGPDPAPEALDKWVCAQPSSQKATNYNLHITEKLEVLAKAYSVQGDKWRALGYAKAINALKSFHKPVSSYQEACSIPGIGKRMAEKVMEILESGHLRKLDHISDSVPVLELFSNIWGAGTKTAQMWYHQGFRNLEDLQSLGSLTAQQAIGLKHYDDFLDRMPREEAAEIEQTVRISAQAFNPGLLCVACGSYRRGKMTCGDVDVLITHPDGRSHRGIFSCLLDSLRQQGFLTDDLVSQEENGQQQKYLGVCRLPGPGKRHRRLDIIVVPYCEFACALLYFTGSAHFNRSMRALAKTKGMSLSEHALSAAVVRNSQGVKVGPGQVLPTPTEKDVFKHLGLPYREPAERDW.

A BRCT domain is found at 35–131; the sequence is EARGWLSSLR…RLTDTEGFSL (97 aa). 2 disordered regions span residues 126 to 204 and 214 to 233; these read TEGF…GPQV and TGHYPTPPEEDGGPDPAPEA. Residues 263-277 are DNA-binding; the sequence is KAYSVQGDKWRALGY. The active-site Schiff-base intermediate with DNA is the Lys310. The tract at residues 343–346 is DNA-binding; it reads GTKT. DCTP contacts are provided by residues Arg384, 415–418, and 424–427; these read SYRR and GDVD. Positions 418–427 are involved in primer binding; the sequence is RGKMTCGDVD. Positions 425, 427, and 488 each coordinate Mn(2+). The segment at 464 to 503 is DNA-binding; the sequence is ENGQQQKYLGVCRLPGPGKRHRRLDIIVVPYCEFACALLY. Asn511 serves as a coordination point for dCTP.

Belongs to the DNA polymerase type-X family. Interacts with PCNA. Interacts with PAXX; promoting POLL recruitment to double-strand breaks (DSBs) and stimulation of the end-filling activity of POLL. Interacts with XRCC4; promoting POLL recruitment to double-strand breaks (DSBs) and stimulation of the end-filling activity of POLL. Interacts with NHEJ1/XLF; promoting POLL recruitment to double-strand breaks (DSBs) and stimulation of the end-filling activity of POLL. Mn(2+) serves as cofactor.

It localises to the nucleus. It carries out the reaction DNA(n) + a 2'-deoxyribonucleoside 5'-triphosphate = DNA(n+1) + diphosphate. In terms of biological role, DNA polymerase that functions in several pathways of DNA repair. Involved in base excision repair (BER) responsible for repair of lesions that give rise to abasic (AP) sites in DNA. Also contributes to DNA double-strand break repair by non-homologous end joining and homologous recombination. Has both template-dependent and template-independent (terminal transferase) DNA polymerase activities. Also has a 5'-deoxyribose-5-phosphate lyase (dRP lyase) activity. This Mus musculus (Mouse) protein is DNA polymerase lambda.